Here is an 89-residue protein sequence, read N- to C-terminus: Endoribonuclease VapD 1 (89 aa).

This sequence belongs to the VapD ribonuclease family. As to quaternary structure, homodimer.

Functionally, cleaves ssRNA, mostly between U:A. The sequence is that of Endoribonuclease VapD 1 from Riemerella anatipestifer (Moraxella anatipestifer).